The primary structure comprises 219 residues: MVDLKTKAFDISQNFTIALDGPAASGKGTIGLILAKKFSLKYFQSSIVYRQLAFDCISQKIDVTDIDAVIALSKELKLDNNFDLENENIGNIASQIAVISEIRNNLNKYLINLVKTTPRMIMEGRDIGTVVAPDADLKIFITANPQIRAERRYKQLQAKGKTCILAEILQQIILRDKRDKERKAAPLLPASDALIIDTSKLSAMEVVEEVTNYIKNKIT.

An ATP-binding site is contributed by 21–29 (GPAASGKGT).

This sequence belongs to the cytidylate kinase family. Type 1 subfamily.

Its subcellular location is the cytoplasm. It catalyses the reaction CMP + ATP = CDP + ADP. It carries out the reaction dCMP + ATP = dCDP + ADP. The chain is Cytidylate kinase from Rickettsia rickettsii (strain Iowa).